The chain runs to 98 residues: NADH-ubiquinone oxidoreductase chain 4L (98 aa).

The next 3 membrane-spanning stretches (helical) occupy residues 1–21 (MTLI…GLLM), 29–49 (ALLC…LTIL), and 61–81 (IILL…LVMV).

It belongs to the complex I subunit 4L family. In terms of assembly, core subunit of respiratory chain NADH dehydrogenase (Complex I) which is composed of 45 different subunits.

Its subcellular location is the mitochondrion inner membrane. It catalyses the reaction a ubiquinone + NADH + 5 H(+)(in) = a ubiquinol + NAD(+) + 4 H(+)(out). In terms of biological role, core subunit of the mitochondrial membrane respiratory chain NADH dehydrogenase (Complex I) which catalyzes electron transfer from NADH through the respiratory chain, using ubiquinone as an electron acceptor. Part of the enzyme membrane arm which is embedded in the lipid bilayer and involved in proton translocation. This is NADH-ubiquinone oxidoreductase chain 4L (MT-ND4L) from Megaptera novaeangliae (Humpback whale).